We begin with the raw amino-acid sequence, 447 residues long: Delta(5) fatty acid desaturase fat-4 (447 aa).

One can recognise a Cytochrome b5 heme-binding domain in the interval 1-80 (MVLREQEHEP…TQEPEIPDIK (80 aa)). The next 4 helical transmembrane spans lie at 137-157 (IFTILFAFYLQYHTYYLPSAI), 257-277 (WTFMLPFLRLSWLLQSIIFVS), 292-312 (IYEQVGLSLHWAWSLGQLYFL), and 319-339 (IMFFLVSHLVGGFLLSHVVTF).

This sequence belongs to the fatty acid desaturase type 1 family.

The protein localises to the membrane. It catalyses the reaction (11Z,14Z)-eicosadienoyl-CoA + 2 Fe(II)-[cytochrome b5] + O2 + 2 H(+) = (5Z,11Z,14Z)-eicosatrienoyl-CoA + 2 Fe(III)-[cytochrome b5] + 2 H2O. The catalysed reaction is (11Z,14Z,17Z)-eicosatrienoyl-CoA + 2 Fe(II)-[cytochrome b5] + O2 + 2 H(+) = (5Z,11Z,14Z,17Z)-eicosatetraenoyl-CoA + 2 Fe(III)-[cytochrome b5] + 2 H2O. It carries out the reaction (8Z,11Z,14Z,17Z)-eicosatetraenoyl-CoA + 2 Fe(II)-[cytochrome b5] + O2 + 2 H(+) = (5Z,8Z,11Z,14Z,17Z)-eicosapentaenoyl-CoA + 2 Fe(III)-[cytochrome b5] + 2 H2O. The enzyme catalyses (8Z,11Z,14Z)-eicosatrienoyl-CoA + 2 Fe(II)-[cytochrome b5] + O2 + 2 H(+) = (5Z,8Z,11Z,14Z)-eicosatetraenoyl-CoA + 2 Fe(III)-[cytochrome b5] + 2 H2O. The protein operates within lipid metabolism; polyunsaturated fatty acid biosynthesis. Its function is as follows. Can function as a Delta(5) fatty acid desaturase and behaves as a (8-3) desaturase. Introduces a double bond in the fatty acid chain 5 carbons away from carboxy terminal to biosynthesize polyunsaturated fatty acids (PUFAs) endogenously (PUFAs are essential for membrane structure and many cellular and physiological processes). Acts on a variety of substrates such as dihomo-gamma-linoleoyl-CoA ((8Z,11Z,14Z)-eicosatrienoyl-CoA, 20:3n-6) to generate arachidonoyl-CoA ((5Z,8Z,11Z,14Z)-eicosatetraenoyl-CoA, 20:4n-6). Also acts on a number of other substrates, including fatty acids that do not contain a double bond at the 8 position like (11Z,14Z,17Z)-eicosatrienoyl-CoA (20:3n-3) to produce (5Z,11Z,14Z,17Z)-eicosatetraenoyl-CoA (20:4n-3). Unlike plants, Caenorhabditis elegans desaturases seem to use fatty acyl-CoAs as substrates. This chain is Delta(5) fatty acid desaturase fat-4 (fat-4), found in Caenorhabditis elegans.